Consider the following 86-residue polypeptide: Diphthamide biosynthesis protein 3 (86 aa).

Residues 4–60 (YHDEVEIEDFEYDEEEEMYYYPCPCGDRFQISKEELIEGEEVATCPSCSLVIKVIYD) enclose the DPH-type MB domain. 4 residues coordinate Fe cation: Cys-26, Cys-28, Cys-48, and Cys-51.

Belongs to the DPH3 family. In terms of assembly, component of the 2-(3-amino-3-carboxypropyl)histidine synthase complex composed of Dph1, Dph2, Dph3 and a NADH-dependent reductase. The cofactor is Fe(2+).

The enzyme catalyses [3Fe-4S](1+)-[protein] + Fe(2+)-[Dph3] = [3Fe-4S](0)-[protein] + Fe(3+)-[Dph3]. The catalysed reaction is 2 [3Fe-4S](0)-[protein] + 2 Fe(2+)-[Dph3] + NADH = 2 [4Fe-4S](1+)-[protein] + 2 [Dph3] + NAD(+) + H(+). The protein operates within protein modification; peptidyl-diphthamide biosynthesis. Functionally, required for the first step of diphthamide biosynthesis, a post-translational modification of histidine which occurs in elongation factor 2. Dph1 and Dph2 transfer a 3-amino-3-carboxypropyl (ACP) group from S-adenosyl-L-methionine (SAM) to a histidine residue, the reaction is assisted by a reduction system comprising Dph3 and a NADH-dependent reductase. Acts as an electron donor to reduce the Fe-S cluster in Dph1-Dph2 keeping the [4Fe-4S] clusters in the active and reduced state. Restores iron to Dph1-Dph2 iron-sulfur clusters which have degraded from [4Fe-4S] to [3Fe-4S] by donating an iron atom to reform [4Fe-4S] clusters, in a manner dependent on the presence of elongation factor 2 and SAM. Associates with the elongator complex and is required for tRNA Wobble base modifications mediated by the elongator complex. The elongator complex is required for multiple tRNA modifications, including mcm5U (5-methoxycarbonylmethyl uridine), mcm5s 2U (5-methoxycarbonylmethyl-2-thiouridine), and ncm5U (5-carbamoylmethyl uridine). The sequence is that of Diphthamide biosynthesis protein 3 from Drosophila melanogaster (Fruit fly).